The following is a 1462-amino-acid chain: Gag-Pol polyprotein (1462 aa).

A lipid anchor (N-myristoyl glycine; by host) is attached at G2. Residues 7–31 (VLRGKKADELEKVRLRPNGKKRYRL) are interaction with Gp41. The Nuclear export signal motif lies at 16–22 (LEKVRLR). Residues 26–32 (KKRYRLK) carry the Nuclear localization signal motif. Residues 191-228 (NCVGDHQAAMQIIREIINEEAADWDAQHPIPGPLPAGQ) form an interaction with human PPIA/CYPA and NUP153 region. The segment at 279–365 (YNPTNILDVK…GGPSQKARLM (87 aa)) is dimerization/Multimerization of capsid protein p24. 2 consecutive CCHC-type zinc fingers follow at residues 389 to 406 (IRCW…QCRA) and 410 to 427 (QGCW…NCPE). The disordered stretch occupies residues 433–509 (LDGPTGKAAP…DAPQRGDRGL (77 aa)). A compositionally biased stretch (polar residues) spans 448-465 (PSSSGADTNSTPNRSSSG). 2 stretches are compositionally biased toward basic and acidic residues: residues 472-482 (AAREKAERAEG) and 497-507 (AGRDAPQRGDR). Residues 512 to 516 (PQFSL) form a dimerization of protease region. The Peptidase A2 domain occupies 532–601 (EVLLDTGADD…PINIFGRNIL (70 aa)). Catalysis depends on D536, which acts as the For protease activity; shared with dimeric partner. Dimerization of protease regions lie at residues 560–566 (GIGGFIN) and 599–611 (NILA…LNLP). The region spanning 655–845 (GQLEEAPPTN…PFQWMGYELW (191 aa)) is the Reverse transcriptase domain. Residues D720, D795, and D796 each contribute to the Mg(2+) site. Positions 837–845 (FQWMGYELW) are RT 'primer grip'. Residues 1007-1023 (WEQWWDNYWQVTWVPEW) carry the Tryptophan repeat motif motif. The RNase H type-1 domain occupies 1043 to 1166 (IPGTETFYTD…VDHLVSQGIR (124 aa)). 4 residues coordinate Mg(2+): D1052, E1087, D1107, and D1158. Residues 1172–1213 (EKIEPAQEEHEKYHSNIKELTHKFGIPQLVARQIVNTCAQCQ) form an Integrase-type zinc finger. Residues H1181, H1185, C1209, and C1212 each contribute to the Zn(2+) site. The 152-residue stretch at 1223–1374 (VNAEIGVWQM…PAERLINMIT (152 aa)) folds into the Integrase catalytic domain. 3 residues coordinate Mg(2+): D1233, D1285, and E1321. A DNA-binding region (integrase-type) is located at residues 1392-1439 (FQVYYREGRDQLWKGPGELLWKGDGAVIVKVGADIKVVPRRKAKIIRD).

As to quaternary structure, homotrimer; further assembles as hexamers of trimers. Interacts with gp41 (via C-terminus). Interacts with host CALM1; this interaction induces a conformational change in the Matrix protein, triggering exposure of the myristate group. Interacts with host AP3D1; this interaction allows the polyprotein trafficking to multivesicular bodies during virus assembly. Part of the pre-integration complex (PIC) which is composed of viral genome, matrix protein, Vpr and integrase. In terms of assembly, homodimer; the homodimer further multimerizes as homohexamers or homopentamers. Interacts with human PPIA/CYPA. Interacts with human NUP153. Interacts with host PDZD8; this interaction stabilizes the capsid. Interacts with monkey TRIM5; this interaction destabilizes the capsid. Homodimer, whose active site consists of two apposed aspartic acid residues. As to quaternary structure, heterodimer of p66 RT and p51 RT (RT p66/p51). Heterodimerization of RT is essential for DNA polymerase activity. The overall folding of the subdomains is similar in p66 RT and p51 RT but the spatial arrangements of the subdomains are dramatically different. In terms of assembly, homotetramer; may further associate as a homohexadecamer. Part of the pre-integration complex (PIC) which is composed of viral genome, matrix protein, Vpr and integrase. Interacts with human SMARCB1/INI1 and human PSIP1/LEDGF isoform 1. Interacts with human KPNA3; this interaction might play a role in nuclear import of the pre-integration complex. Interacts with human NUP153; this interaction might play a role in nuclear import of the pre-integration complex. Mg(2+) serves as cofactor. In terms of processing, specific enzymatic cleavages by the viral protease yield mature proteins. The protease is released by autocatalytic cleavage. The polyprotein is cleaved during and after budding, this process is termed maturation. Proteolytic cleavage of p66 RT removes the RNase H domain to yield the p51 RT subunit. Nucleocapsid protein p7 might be further cleaved after virus entry.

The protein localises to the host cell membrane. Its subcellular location is the host endosome. The protein resides in the host multivesicular body. It is found in the virion membrane. It localises to the host nucleus. The protein localises to the host cytoplasm. Its subcellular location is the virion. The catalysed reaction is Endopeptidase for which the P1 residue is preferably hydrophobic.. It carries out the reaction Endohydrolysis of RNA in RNA/DNA hybrids. Three different cleavage modes: 1. sequence-specific internal cleavage of RNA. Human immunodeficiency virus type 1 and Moloney murine leukemia virus enzymes prefer to cleave the RNA strand one nucleotide away from the RNA-DNA junction. 2. RNA 5'-end directed cleavage 13-19 nucleotides from the RNA end. 3. DNA 3'-end directed cleavage 15-20 nucleotides away from the primer terminus.. It catalyses the reaction 3'-end directed exonucleolytic cleavage of viral RNA-DNA hybrid.. The enzyme catalyses DNA(n) + a 2'-deoxyribonucleoside 5'-triphosphate = DNA(n+1) + diphosphate. Protease: The viral protease is inhibited by many synthetic protease inhibitors (PIs), such as amprenavir, atazanavir, indinavir, loprinavir, nelfinavir, ritonavir and saquinavir. Use of protease inhibitors in tritherapy regimens permit more ambitious therapeutic strategies. Reverse transcriptase/ribonuclease H: RT can be inhibited either by nucleoside RT inhibitors (NRTIs) or by non nucleoside RT inhibitors (NNRTIs). NRTIs act as chain terminators, whereas NNRTIs inhibit DNA polymerization by binding a small hydrophobic pocket near the RT active site and inducing an allosteric change in this region. Classical NRTIs are abacavir, adefovir (PMEA), didanosine (ddI), lamivudine (3TC), stavudine (d4T), tenofovir (PMPA), zalcitabine (ddC), and zidovudine (AZT). Classical NNRTIs are atevirdine (BHAP U-87201E), delavirdine, efavirenz (DMP-266), emivirine (I-EBU), and nevirapine (BI-RG-587). The tritherapies used as a basic effective treatment of AIDS associate two NRTIs and one NNRTI. Its function is as follows. Mediates, with Gag polyprotein, the essential events in virion assembly, including binding the plasma membrane, making the protein-protein interactions necessary to create spherical particles, recruiting the viral Env proteins, and packaging the genomic RNA via direct interactions with the RNA packaging sequence (Psi). Gag-Pol polyprotein may regulate its own translation, by the binding genomic RNA in the 5'-UTR. At low concentration, the polyprotein would promote translation, whereas at high concentration, the polyprotein would encapsidate genomic RNA and then shut off translation. In terms of biological role, targets the polyprotein to the plasma membrane via a multipartite membrane-binding signal, that includes its myristoylated N-terminus. Matrix protein is part of the pre-integration complex. Implicated in the release from host cell mediated by Vpu. Binds to RNA. Functionally, forms the conical core that encapsulates the genomic RNA-nucleocapsid complex in the virion. Most core are conical, with only 7% tubular. The core is constituted by capsid protein hexamer subunits. The core is disassembled soon after virion entry. Host restriction factors such as TRIM5-alpha or TRIMCyp bind retroviral capsids and cause premature capsid disassembly, leading to blocks in reverse transcription. Capsid restriction by TRIM5 is one of the factors which restricts HIV-1 to the human species. Host PIN1 apparently facilitates the virion uncoating. On the other hand, interactions with PDZD8 or CYPA stabilize the capsid. Encapsulates and protects viral dimeric unspliced genomic RNA (gRNA). Binds these RNAs through its zinc fingers. Acts as a nucleic acid chaperone which is involved in rearangement of nucleic acid secondary structure during gRNA retrotranscription. Also facilitates template switch leading to recombination. As part of the polyprotein, participates in gRNA dimerization, packaging, tRNA incorporation and virion assembly. Its function is as follows. Aspartyl protease that mediates proteolytic cleavages of Gag and Gag-Pol polyproteins during or shortly after the release of the virion from the plasma membrane. Cleavages take place as an ordered, step-wise cascade to yield mature proteins. This process is called maturation. Displays maximal activity during the budding process just prior to particle release from the cell. Also cleaves Nef and Vif, probably concomitantly with viral structural proteins on maturation of virus particles. Hydrolyzes host EIF4GI and PABP1 in order to shut off the capped cellular mRNA translation. The resulting inhibition of cellular protein synthesis serves to ensure maximal viral gene expression and to evade host immune response. In terms of biological role, multifunctional enzyme that converts the viral RNA genome into dsDNA in the cytoplasm, shortly after virus entry into the cell. This enzyme displays a DNA polymerase activity that can copy either DNA or RNA templates, and a ribonuclease H (RNase H) activity that cleaves the RNA strand of RNA-DNA heteroduplexes in a partially processive 3' to 5' endonucleasic mode. Conversion of viral genomic RNA into dsDNA requires many steps. A tRNA(3)-Lys binds to the primer-binding site (PBS) situated at the 5'-end of the viral RNA. RT uses the 3' end of the tRNA primer to perform a short round of RNA-dependent minus-strand DNA synthesis. The reading proceeds through the U5 region and ends after the repeated (R) region which is present at both ends of viral RNA. The portion of the RNA-DNA heteroduplex is digested by the RNase H, resulting in a ssDNA product attached to the tRNA primer. This ssDNA/tRNA hybridizes with the identical R region situated at the 3' end of viral RNA. This template exchange, known as minus-strand DNA strong stop transfer, can be either intra- or intermolecular. RT uses the 3' end of this newly synthesized short ssDNA to perform the RNA-dependent minus-strand DNA synthesis of the whole template. RNase H digests the RNA template except for two polypurine tracts (PPTs) situated at the 5'-end and near the center of the genome. It is not clear if both polymerase and RNase H activities are simultaneous. RNase H probably can proceed both in a polymerase-dependent (RNA cut into small fragments by the same RT performing DNA synthesis) and a polymerase-independent mode (cleavage of remaining RNA fragments by free RTs). Secondly, RT performs DNA-directed plus-strand DNA synthesis using the PPTs that have not been removed by RNase H as primers. PPTs and tRNA primers are then removed by RNase H. The 3' and 5' ssDNA PBS regions hybridize to form a circular dsDNA intermediate. Strand displacement synthesis by RT to the PBS and PPT ends produces a blunt ended, linear dsDNA copy of the viral genome that includes long terminal repeats (LTRs) at both ends. Functionally, catalyzes viral DNA integration into the host chromosome, by performing a series of DNA cutting and joining reactions. This enzyme activity takes place after virion entry into a cell and reverse transcription of the RNA genome in dsDNA. The first step in the integration process is 3' processing. This step requires a complex comprising the viral genome, matrix protein, Vpr and integrase. This complex is called the pre-integration complex (PIC). The integrase protein removes 2 nucleotides from each 3' end of the viral DNA, leaving recessed CA OH's at the 3' ends. In the second step, the PIC enters cell nucleus. This process is mediated through integrase and Vpr proteins, and allows the virus to infect a non dividing cell. This ability to enter the nucleus is specific of lentiviruses, other retroviruses cannot and rely on cell division to access cell chromosomes. In the third step, termed strand transfer, the integrase protein joins the previously processed 3' ends to the 5' ends of strands of target cellular DNA at the site of integration. The 5'-ends are produced by integrase-catalyzed staggered cuts, 5 bp apart. A Y-shaped, gapped, recombination intermediate results, with the 5'-ends of the viral DNA strands and the 3' ends of target DNA strands remaining unjoined, flanking a gap of 5 bp. The last step is viral DNA integration into host chromosome. This involves host DNA repair synthesis in which the 5 bp gaps between the unjoined strands are filled in and then ligated. Since this process occurs at both cuts flanking the HIV genome, a 5 bp duplication of host DNA is produced at the ends of HIV-1 integration. Alternatively, Integrase may catalyze the excision of viral DNA just after strand transfer, this is termed disintegration. The polypeptide is Gag-Pol polyprotein (gag-pol) (Human immunodeficiency virus type 2 subtype A (isolate D194) (HIV-2)).